The following is a 187-amino-acid chain: Small monomeric GTPase RhbA (187 aa).

Ser17, Val18, Gly19, Lys20, Ser21, Ser22, Val33, and Glu34 together coordinate GDP. Ser17 is a binding site for GTP. GTP contacts are provided by Gly19, Lys20, Ser21, Ser22, and Val33. Position 21 (Ser21) interacts with Mg(2+). Residues Tyr36, Thr39, Asn120, Asp123, and Ala152 each contribute to the GTP site. An Effector region motif is present at residues 36–44; the sequence is YYPTIENTF. Mg(2+) is bound at residue Thr39. Residues Asn120, Asp123, and Ala152 each contribute to the GDP site. Cys184 carries S-farnesyl cysteine lipidation.

Belongs to the small GTPase superfamily. Rheb family. Post-translationally, farnesylation is important for efficiently activating mTORC1-mediated signaling.

Its subcellular location is the cell membrane. The catalysed reaction is GTP + H2O = GDP + phosphate + H(+). With respect to regulation, alternates between an inactive form bound to GDP and an active form bound to GTP. Functionally, small GTPase that acts as an allosteric activator of the canonical TOR pathway, an evolutionarily conserved central nutrient sensor that stimulates anabolic reactions and macromolecule biosynthesis to promote cellular biomass generation and growth. Plays a role in virulence. In Aspergillus fumigatus (strain ATCC MYA-4609 / CBS 101355 / FGSC A1100 / Af293) (Neosartorya fumigata), this protein is Small monomeric GTPase RhbA.